Consider the following 39-residue polypeptide: Cytochrome b559 subunit beta (39 aa).

The helical transmembrane segment at 14–30 (WLAVHGLAVPTVFFLGS) threads the bilayer. Position 18 (histidine 18) interacts with heme.

It belongs to the PsbE/PsbF family. Heterodimer of an alpha subunit and a beta subunit. PSII is composed of 1 copy each of membrane proteins PsbA, PsbB, PsbC, PsbD, PsbE, PsbF, PsbH, PsbI, PsbJ, PsbK, PsbL, PsbM, PsbT, PsbX, PsbY, PsbZ, Psb30/Ycf12, at least 3 peripheral proteins of the oxygen-evolving complex and a large number of cofactors. It forms dimeric complexes. Heme b serves as cofactor.

The protein resides in the plastid membrane. This b-type cytochrome is tightly associated with the reaction center of photosystem II (PSII). PSII is a light-driven water:plastoquinone oxidoreductase that uses light energy to abstract electrons from H(2)O, generating O(2) and a proton gradient subsequently used for ATP formation. It consists of a core antenna complex that captures photons, and an electron transfer chain that converts photonic excitation into a charge separation. The sequence is that of Cytochrome b559 subunit beta from Cuscuta europaea (European dodder).